We begin with the raw amino-acid sequence, 260 residues long: UPF0294 protein YPO1077/y3099/YP_2772 (260 aa).

The protein belongs to the UPF0294 family.

It is found in the cytoplasm. The protein is UPF0294 protein YPO1077/y3099/YP_2772 of Yersinia pestis.